Here is a 98-residue protein sequence, read N- to C-terminus: uncharacterized protein (98 aa).

Belongs to the YciI family. In terms of assembly, homodimer.

This is an uncharacterized protein from Haemophilus influenzae (strain ATCC 51907 / DSM 11121 / KW20 / Rd).